A 75-amino-acid polypeptide reads, in one-letter code: Putative membrane protein insertion efficiency factor (75 aa).

This sequence belongs to the UPF0161 family.

The protein localises to the cell inner membrane. Functionally, could be involved in insertion of integral membrane proteins into the membrane. The protein is Putative membrane protein insertion efficiency factor of Leptospira biflexa serovar Patoc (strain Patoc 1 / ATCC 23582 / Paris).